Consider the following 227-residue polypeptide: GRF-interacting factor 1 (227 aa).

The segment covering 124 to 139 has biased composition (low complexity); that stretch reads ALSPLQQQQQQQAAAA. Disordered stretches follow at residues 124–160 and 188–227; these read ALSP…LHGE and GGGG…EEGS. Over residues 217–227 the composition is skewed to basic and acidic residues; it reads EYLKGTEEEGS.

Belongs to the SS18 family. As to quaternary structure, interacts with GRF4. As to expression, highly expressed in internodes, nodes, developing spikelets and developing anthers. Expressed at low levels in roots and mature glumes.

It is found in the nucleus. It localises to the cytoplasm. Its function is as follows. Transcription coactivator that plays a role in the regulation of meristematic function in leaves, stems and inflorescences. May regulate leaf size, length of stem internodes, and seed size by promoting cell expansion. Transcription coactivator that plays a role in the regulation of grain size. Component of a network formed by the microRNA396 (miRNA396), the GRFs and their interacting factors (GIFs) acting in the regulation of meristem function, at least partially through the control of cell proliferation. Component of the miRNA396c-GRF4-GIF1 regulatory module that plays an important role in grain size determination. This Oryza sativa subsp. japonica (Rice) protein is GRF-interacting factor 1.